The chain runs to 111 residues: MICOS complex subunit MIC13 (111 aa).

Residues 8 to 26 traverse the membrane as a helical segment; sequence VVKFATKVTIAGGALYVAY.

This sequence belongs to the MICOS complex subunit Mic13 family. In terms of assembly, component of the mitochondrial contact site and cristae organizing system (MICOS) complex.

It is found in the mitochondrion inner membrane. Functionally, component of the MICOS complex, a large protein complex of the mitochondrial inner membrane that plays crucial roles in the maintenance of crista junctions, inner membrane architecture, and formation of contact sites to the outer membrane. Constituent of mature MICOS complex, it is required for the formation of cristae junction (CJ) and maintenance of cristae morphology. Required for the incorporation of MIC10 into the MICOS complex. The chain is MICOS complex subunit MIC13 from Danio rerio (Zebrafish).